The chain runs to 205 residues: Probable GTP-binding protein EngB (205 aa).

The EngB-type G domain occupies 29–203 (QGAEIAFIGR…KAVLSQWFSS (175 aa)). GTP is bound by residues 37–44 (GRSNAGKS), 64–68 (GRTQM), 82–85 (DLPG), 149–152 (TKSD), and 182–184 (FSS). Residues serine 44 and threonine 66 each contribute to the Mg(2+) site.

It belongs to the TRAFAC class TrmE-Era-EngA-EngB-Septin-like GTPase superfamily. EngB GTPase family. The cofactor is Mg(2+).

Necessary for normal cell division and for the maintenance of normal septation. The polypeptide is Probable GTP-binding protein EngB (Coxiella burnetii (strain CbuK_Q154) (Coxiella burnetii (strain Q154))).